The following is a 148-amino-acid chain: tRNA-specific adenosine deaminase (148 aa).

Residues 1-116 (MEQALKQARL…SNLRYFNSSA (116 aa)) enclose the CMP/dCMP-type deaminase domain. Histidine 48 contacts Zn(2+). Glutamate 50 (proton donor) is an active-site residue. The Zn(2+) site is built by cysteine 78 and cysteine 81.

This sequence belongs to the cytidine and deoxycytidylate deaminase family. In terms of assembly, homodimer. It depends on Zn(2+) as a cofactor.

It catalyses the reaction adenosine(34) in tRNA + H2O + H(+) = inosine(34) in tRNA + NH4(+). In terms of biological role, catalyzes the deamination of adenosine to inosine at the wobble position 34 of tRNA(Arg2). The chain is tRNA-specific adenosine deaminase from Rickettsia typhi (strain ATCC VR-144 / Wilmington).